A 199-amino-acid chain; its full sequence is DNA dC-&gt;dU-editing enzyme APOBEC-3A (199 aa).

A CMP/dCMP-type deaminase domain is found at 27–143 (GRHKTYLCYE…PLYKEALQML (117 aa)). H70 serves as a coordination point for Zn(2+). E72 serves as the catalytic Proton donor. The Zn(2+) site is built by C101 and C106.

Belongs to the cytidine and deoxycytidylate deaminase family. Interacts with AGO2. Interacts with TRIB3 (via N-terminus). Zn(2+) is required as a cofactor. Expressed in peripheral leukocytes with higher expression in CD14-positive phagocytic cells. Highly expressed in keratinocytes and in periphery blood monocytes. Also detected in non-lymphoid tissues including lung and adipose tissues. Found at high levels in colorectal adenocarcinoma, Burkitt's lymphoma and chronic myelogenous leukemia.

Its subcellular location is the nucleus. It localises to the cytoplasm. The catalysed reaction is a 2'-deoxycytidine in single-stranded DNA + H2O + H(+) = a 2'-deoxyuridine in single-stranded DNA + NH4(+). In terms of biological role, DNA deaminase (cytidine deaminase) with restriction activity against viruses, foreign DNA and mobility of retrotransposons. Exhibits antiviral activity against adeno-associated virus (AAV) and human T-cell leukemia virus type 1 (HTLV-1) and may inhibit the mobility of LTR and non-LTR retrotransposons. Selectively targets single-stranded DNA and can deaminate both methylcytosine and cytosine in foreign DNA. Can induce somatic hypermutation in the nuclear and mitochondrial DNA. May also play a role in the epigenetic regulation of gene expression through the process of active DNA demethylation. The chain is DNA dC-&gt;dU-editing enzyme APOBEC-3A (APOBEC3A) from Homo sapiens (Human).